The following is a 335-amino-acid chain: Tetraacyldisaccharide 4'-kinase (335 aa).

Position 59–66 (59–66 (TAGGNGKT)) interacts with ATP.

It belongs to the LpxK family.

The enzyme catalyses a lipid A disaccharide + ATP = a lipid IVA + ADP + H(+). It functions in the pathway glycolipid biosynthesis; lipid IV(A) biosynthesis; lipid IV(A) from (3R)-3-hydroxytetradecanoyl-[acyl-carrier-protein] and UDP-N-acetyl-alpha-D-glucosamine: step 6/6. Functionally, transfers the gamma-phosphate of ATP to the 4'-position of a tetraacyldisaccharide 1-phosphate intermediate (termed DS-1-P) to form tetraacyldisaccharide 1,4'-bis-phosphate (lipid IVA). The chain is Tetraacyldisaccharide 4'-kinase from Vibrio cholerae serotype O1 (strain ATCC 39541 / Classical Ogawa 395 / O395).